A 338-amino-acid polypeptide reads, in one-letter code: Ketol-acid reductoisomerase (NADP(+)) (338 aa).

Residues methionine 1–threonine 181 form the KARI N-terminal Rossmann domain. Residues tyrosine 24–glutamine 27, lysine 47, serine 50, serine 52, and aspartate 82–glutamine 85 each bind NADP(+). Histidine 107 is a catalytic residue. Glycine 133 is an NADP(+) binding site. The region spanning serine 182 to isoleucine 327 is the KARI C-terminal knotted domain. Residues aspartate 190, glutamate 194, glutamate 226, and glutamate 230 each contribute to the Mg(2+) site. Residue serine 251 coordinates substrate.

This sequence belongs to the ketol-acid reductoisomerase family. Mg(2+) is required as a cofactor.

The enzyme catalyses (2R)-2,3-dihydroxy-3-methylbutanoate + NADP(+) = (2S)-2-acetolactate + NADPH + H(+). It catalyses the reaction (2R,3R)-2,3-dihydroxy-3-methylpentanoate + NADP(+) = (S)-2-ethyl-2-hydroxy-3-oxobutanoate + NADPH + H(+). The protein operates within amino-acid biosynthesis; L-isoleucine biosynthesis; L-isoleucine from 2-oxobutanoate: step 2/4. It participates in amino-acid biosynthesis; L-valine biosynthesis; L-valine from pyruvate: step 2/4. Involved in the biosynthesis of branched-chain amino acids (BCAA). Catalyzes an alkyl-migration followed by a ketol-acid reduction of (S)-2-acetolactate (S2AL) to yield (R)-2,3-dihydroxy-isovalerate. In the isomerase reaction, S2AL is rearranged via a Mg-dependent methyl migration to produce 3-hydroxy-3-methyl-2-ketobutyrate (HMKB). In the reductase reaction, this 2-ketoacid undergoes a metal-dependent reduction by NADPH to yield (R)-2,3-dihydroxy-isovalerate. The chain is Ketol-acid reductoisomerase (NADP(+)) from Geotalea uraniireducens (strain Rf4) (Geobacter uraniireducens).